Consider the following 241-residue polypeptide: MTGRLQLHKLVVLGDGGVGKTALTIQLCLQHFVETYDPTIEDSYRKQVVIDNQACMLEVLDTAGQEEYTALRDQWIRDGEGFVLVYSISSRSSFSRIKRFHHQIQRVKESCASSPSYPGSPIATVTTQAPVPIMLVGNKSDRVTEREVSTQEGHALARELGCEFVEASAKNCINVEKAFYDVVRILRRQRQQASRPSLPGNSRTKTGGMGKSESFYQSDGKRGSRKDGEKHRSKPIKCVIL.

GTP is bound by residues 17–22 (GVGKTA), 33–39 (VETYDPT), 63–64 (AG), 138–141 (NKSD), and 168–170 (SAK). Residues 36–44 (YDPTIEDSY) carry the Effector region motif. The disordered stretch occupies residues 190-241 (RQQASRPSLPGNSRTKTGGMGKSESFYQSDGKRGSRKDGEKHRSKPIKCVIL). A compositionally biased stretch (polar residues) spans 191-205 (QQASRPSLPGNSRTK). Positions 219-230 (DGKRGSRKDGEK) are enriched in basic and acidic residues. Cys-238 bears the Cysteine methyl ester mark. Residue Cys-238 is the site of S-farnesyl cysteine attachment. Residues 239 to 241 (VIL) constitute a propeptide, removed in mature form.

Belongs to the small GTPase superfamily. Ras family. In terms of assembly, interacts with farnesyltransferase beta subunit RAM1.

The protein localises to the cell membrane. With respect to regulation, alternates between an inactive form bound to GDP and an active form bound to GTP. Activated by a guanine nucleotide-exchange factor (GEF) and inactivated by a GTPase-activating protein (GAP). Functionally, modulates the activity of the adenylate cyclase catalytic subunit and therefore affects the biosynthesis of cyclic-AMP. Plays a role in both surface attachment and surface recognition of appressoria, a highly specialized infection structure for plant penetration. Regulates appressorium formation by coordinated regulation of cAMP signaling and Pmk1 MAPK pathways. The chain is Ras-like protein 1 from Pyricularia oryzae (strain 70-15 / ATCC MYA-4617 / FGSC 8958) (Rice blast fungus).